A 294-amino-acid chain; its full sequence is MAQTGTDRVKRGMAEMQKGGVIMDVVNAEQAKIAEEAGAVAVMALERVPADIRAAGGVARMADPTIVEEVMNAVSIPVMAKARIGHIVEARVLEAMGVDYIDESEVLTPADEEFHLNKNEYTVPFVCGCRDLGEATRRIAEGASMLRTKGEPGTGNIVEAVRHMRKVNAQVRKVVAMSDDELMTEAKNLGAPYELLLQIKRDGKLPVVNFAAGGVATPADAALMMQLGADGVFVGSGIFKSDNPAKFAKAIVEATTHYTDYKLIAELSKELGTAMKGIEISNLLPEQRMQERGW.

Aspartate 24 contributes to the D-ribose 5-phosphate binding site. Lysine 81 acts as the Schiff-base intermediate with D-ribose 5-phosphate in catalysis. Glycine 153 is a D-ribose 5-phosphate binding site. Position 165 (arginine 165) interacts with D-glyceraldehyde 3-phosphate. D-ribose 5-phosphate-binding positions include glycine 214 and 235–236 (GS).

This sequence belongs to the PdxS/SNZ family. As to quaternary structure, in the presence of PdxT, forms a dodecamer of heterodimers.

It carries out the reaction aldehydo-D-ribose 5-phosphate + D-glyceraldehyde 3-phosphate + L-glutamine = pyridoxal 5'-phosphate + L-glutamate + phosphate + 3 H2O + H(+). It participates in cofactor biosynthesis; pyridoxal 5'-phosphate biosynthesis. Functionally, catalyzes the formation of pyridoxal 5'-phosphate from ribose 5-phosphate (RBP), glyceraldehyde 3-phosphate (G3P) and ammonia. The ammonia is provided by the PdxT subunit. Can also use ribulose 5-phosphate and dihydroxyacetone phosphate as substrates, resulting from enzyme-catalyzed isomerization of RBP and G3P, respectively. This is Pyridoxal 5'-phosphate synthase subunit PdxS from Bacillus velezensis (strain DSM 23117 / BGSC 10A6 / LMG 26770 / FZB42) (Bacillus amyloliquefaciens subsp. plantarum).